The following is a 330-amino-acid chain: ADP-L-glycero-D-manno-heptose-6-epimerase (330 aa).

NADP(+)-binding positions include phenylalanine 11–isoleucine 12, aspartate 32–asparagine 33, lysine 39, lysine 54, glutamate 75–serine 79, and asparagine 92. Tyrosine 139 acts as the Proton acceptor in catalysis. Lysine 143 provides a ligand contact to NADP(+). Asparagine 168 is a substrate binding site. Positions 169 and 177 each coordinate NADP(+). Lysine 177 serves as the catalytic Proton acceptor. Residues arginine 179, histidine 186, phenylalanine 200–tyrosine 203, arginine 213, and tyrosine 292 each bind substrate.

It belongs to the NAD(P)-dependent epimerase/dehydratase family. HldD subfamily. Homopentamer. NADP(+) is required as a cofactor.

It carries out the reaction ADP-D-glycero-beta-D-manno-heptose = ADP-L-glycero-beta-D-manno-heptose. It participates in nucleotide-sugar biosynthesis; ADP-L-glycero-beta-D-manno-heptose biosynthesis; ADP-L-glycero-beta-D-manno-heptose from D-glycero-beta-D-manno-heptose 7-phosphate: step 4/4. Its function is as follows. Catalyzes the interconversion between ADP-D-glycero-beta-D-manno-heptose and ADP-L-glycero-beta-D-manno-heptose via an epimerization at carbon 6 of the heptose. The chain is ADP-L-glycero-D-manno-heptose-6-epimerase from Burkholderia thailandensis (strain ATCC 700388 / DSM 13276 / CCUG 48851 / CIP 106301 / E264).